The chain runs to 169 residues: Peptide methionine sulfoxide reductase MsrA (169 aa).

Cysteine 10 is a catalytic residue.

It belongs to the MsrA Met sulfoxide reductase family.

It catalyses the reaction L-methionyl-[protein] + [thioredoxin]-disulfide + H2O = L-methionyl-(S)-S-oxide-[protein] + [thioredoxin]-dithiol. The enzyme catalyses [thioredoxin]-disulfide + L-methionine + H2O = L-methionine (S)-S-oxide + [thioredoxin]-dithiol. In terms of biological role, has an important function as a repair enzyme for proteins that have been inactivated by oxidation. Catalyzes the reversible oxidation-reduction of methionine sulfoxide in proteins to methionine. The chain is Peptide methionine sulfoxide reductase MsrA from Streptococcus agalactiae serotype III (strain NEM316).